The sequence spans 353 residues: MPQKVRIALDAMGGDVGAAVVIPGAAIALSRHPDAEFLLFGDSAKIVPELDQHPRLKAVSRVIHTDVAVSMEDKPSQALRRGRKTSSMWLALEAVKKGEADVAVSAGNTGALVAMARFCLRMLEGIDRPALAAIWPTRRAKCVVLDLGATIGGDAHHLVALAAMGGALASVLFEKPRPTVGLLNIGVEEIKGHQEIREAGEMLRSMNLPQLDYIGFVEGDGIGKGEADVIVTEGFSGNIALKAAEGAVRQMMDLLRSAIKASWLAQIGYLLARGAFRVLREKIDPKNYNGSVVLGLNGIVVKSHGGSDAEGFARAVDVGYEMARFDLLTKINQTLNRDGGALAPAPVAQEAVS.

The protein belongs to the PlsX family. Homodimer. Probably interacts with PlsY.

The protein resides in the cytoplasm. It catalyses the reaction a fatty acyl-[ACP] + phosphate = an acyl phosphate + holo-[ACP]. It functions in the pathway lipid metabolism; phospholipid metabolism. Catalyzes the reversible formation of acyl-phosphate (acyl-PO(4)) from acyl-[acyl-carrier-protein] (acyl-ACP). This enzyme utilizes acyl-ACP as fatty acyl donor, but not acyl-CoA. The protein is Phosphate acyltransferase of Bradyrhizobium sp. (strain BTAi1 / ATCC BAA-1182).